The following is a 399-amino-acid chain: Imidazolonepropionase (399 aa).

Residues 1–13 (MSETLYTGISQLA) are compositionally biased toward polar residues. The segment at 1–20 (MSETLYTGISQLATPRPGPQ) is disordered. The Fe(3+) site is built by histidine 74 and histidine 76. Residues histidine 74 and histidine 76 each coordinate Zn(2+). Positions 83, 146, and 176 each coordinate 4-imidazolone-5-propanoate. Residue tyrosine 146 coordinates N-formimidoyl-L-glutamate. Histidine 238 is a binding site for Fe(3+). Histidine 238 is a Zn(2+) binding site. Glutamine 241 serves as a coordination point for 4-imidazolone-5-propanoate. Residue aspartate 312 participates in Fe(3+) binding. Residue aspartate 312 participates in Zn(2+) binding. N-formimidoyl-L-glutamate-binding residues include asparagine 314 and glycine 316. Serine 317 serves as a coordination point for 4-imidazolone-5-propanoate.

The protein belongs to the metallo-dependent hydrolases superfamily. HutI family. The cofactor is Zn(2+). Requires Fe(3+) as cofactor.

It is found in the cytoplasm. The catalysed reaction is 4-imidazolone-5-propanoate + H2O = N-formimidoyl-L-glutamate. It participates in amino-acid degradation; L-histidine degradation into L-glutamate; N-formimidoyl-L-glutamate from L-histidine: step 3/3. Functionally, catalyzes the hydrolytic cleavage of the carbon-nitrogen bond in imidazolone-5-propanoate to yield N-formimidoyl-L-glutamate. It is the third step in the universal histidine degradation pathway. The chain is Imidazolonepropionase from Deinococcus radiodurans (strain ATCC 13939 / DSM 20539 / JCM 16871 / CCUG 27074 / LMG 4051 / NBRC 15346 / NCIMB 9279 / VKM B-1422 / R1).